Consider the following 450-residue polypeptide: Phosphoglucosamine mutase (450 aa).

Residue serine 101 is the Phosphoserine intermediate of the active site. Mg(2+)-binding residues include serine 101, aspartate 242, aspartate 244, and aspartate 246. Residue serine 101 is modified to Phosphoserine.

It belongs to the phosphohexose mutase family. Mg(2+) is required as a cofactor. In terms of processing, activated by phosphorylation.

It catalyses the reaction alpha-D-glucosamine 1-phosphate = D-glucosamine 6-phosphate. Functionally, catalyzes the conversion of glucosamine-6-phosphate to glucosamine-1-phosphate. In Rhodopseudomonas palustris (strain TIE-1), this protein is Phosphoglucosamine mutase.